The chain runs to 361 residues: Septin-2 (361 aa).

Tyr17 carries the phosphotyrosine modification. The 273-residue stretch at 34–306 folds into the Septin-type G domain; that stretch reads KGFEFTLMVV…ENFRSERLKR (273 aa). The interval 44–51 is G1 motif; sequence GESGLGKS. GTP contacts are provided by residues 44–51, Thr78, Gly104, and 183–191; these read GESGLGKS and KADTLTLKE. A G3 motif region spans residues 101-104; that stretch reads DTPG. Positions 182–185 are G4 motif; it reads AKAD. Lys190 carries the post-translational modification N6-acetyllysine. Tyr211 is subject to Phosphotyrosine. At Ser218 the chain carries Phosphoserine. GTP-binding residues include Gly241 and Arg256. The tract at residues 260–270 is important for dimerization; that stretch reads WGVVEVENPEH.

It belongs to the TRAFAC class TrmE-Era-EngA-EngB-Septin-like GTPase superfamily. Septin GTPase family. In terms of assembly, septins polymerize into heterooligomeric protein complexes that form filaments, and associate with cellular membranes, actin filaments and microtubules. GTPase activity is required for filament formation. Septin filaments are assembled from asymmetrical heterotrimers, composed of SEPTIN2, SEPTIN6 and SEPTIN7 that associate head-to-head to form a hexameric unit. Interaction between SEPTIN2 and SEPTIN7 seems indirect. Also interacts with SEPTIN9 and SEPTIN5. Interaction with SEPTIN4 not detected. Component of a septin core octameric complex consisting of SEPTIN12, SEPTIN7, SEPTIN6 and SEPTIN2 or SEPTIN4 in the order 12-7-6-2-2-6-7-12 or 12-7-6-4-4-6-7-12 and located in the sperm annulus. Interacts with MAP4. Interacts with DZIP1L.

Its subcellular location is the cytoplasm. It is found in the cytoskeleton. The protein localises to the spindle. The protein resides in the cleavage furrow. It localises to the midbody. Its subcellular location is the cell cortex. It is found in the cell projection. The protein localises to the cilium membrane. The protein resides in the cilium. It localises to the flagellum. In terms of biological role, filament-forming cytoskeletal GTPase. Forms a filamentous structure with SEPTIN12, SEPTIN6, SEPTIN2 and probably SEPTIN4 at the sperm annulus which is required for the structural integrity and motility of the sperm tail during postmeiotic differentiation. Required for normal organization of the actin cytoskeleton. Plays a role in the biogenesis of polarized columnar-shaped epithelium by maintaining polyglutamylated microtubules, thus facilitating efficient vesicle transport, and by impeding MAP4 binding to tubulin. Required for the progression through mitosis. Forms a scaffold at the midplane of the mitotic splindle required to maintain CENPE localization at kinetochores and consequently chromosome congression. During anaphase, may be required for chromosome segregation and spindle elongation. Plays a role in ciliogenesis and collective cell movements. In cilia, required for the integrity of the diffusion barrier at the base of the primary cilium that prevents diffusion of transmembrane proteins between the cilia and plasma membranes: probably acts by regulating the assembly of the tectonic-like complex (also named B9 complex) by localizing TMEM231 protein. In Rattus norvegicus (Rat), this protein is Septin-2.